A 56-amino-acid polypeptide reads, in one-letter code: Large ribosomal subunit protein bL32 (56 aa).

A disordered region spans residues 1–26; sequence MAVQQNKKSRSKRGMRRSHDALSTAQ. Positions 7 to 16 are enriched in basic residues; that stretch reads KKSRSKRGMR.

The protein belongs to the bacterial ribosomal protein bL32 family.

This Shewanella denitrificans (strain OS217 / ATCC BAA-1090 / DSM 15013) protein is Large ribosomal subunit protein bL32.